The chain runs to 305 residues: Aspartate carbamoyltransferase catalytic subunit (305 aa).

Positions 54 and 55 each coordinate carbamoyl phosphate. Lys83 is an L-aspartate binding site. Arg104, His132, and Gln135 together coordinate carbamoyl phosphate. The L-aspartate site is built by Arg165 and Arg226. 2 residues coordinate carbamoyl phosphate: Leu265 and Pro266.

Belongs to the aspartate/ornithine carbamoyltransferase superfamily. ATCase family. In terms of assembly, heterooligomer of catalytic and regulatory chains.

The enzyme catalyses carbamoyl phosphate + L-aspartate = N-carbamoyl-L-aspartate + phosphate + H(+). It participates in pyrimidine metabolism; UMP biosynthesis via de novo pathway; (S)-dihydroorotate from bicarbonate: step 2/3. Functionally, catalyzes the condensation of carbamoyl phosphate and aspartate to form carbamoyl aspartate and inorganic phosphate, the committed step in the de novo pyrimidine nucleotide biosynthesis pathway. This chain is Aspartate carbamoyltransferase catalytic subunit, found in Pyrobaculum arsenaticum (strain DSM 13514 / JCM 11321 / PZ6).